Consider the following 113-residue polypeptide: Large ribosomal subunit protein bL17 (113 aa).

It belongs to the bacterial ribosomal protein bL17 family. As to quaternary structure, part of the 50S ribosomal subunit. Contacts protein L32.

This chain is Large ribosomal subunit protein bL17, found in Caldicellulosiruptor bescii (strain ATCC BAA-1888 / DSM 6725 / KCTC 15123 / Z-1320) (Anaerocellum thermophilum).